The chain runs to 108 residues: Small ribosomal subunit protein bS6 (108 aa).

This sequence belongs to the bacterial ribosomal protein bS6 family.

Functionally, binds together with bS18 to 16S ribosomal RNA. This Nostoc sp. (strain PCC 7120 / SAG 25.82 / UTEX 2576) protein is Small ribosomal subunit protein bS6.